The chain runs to 281 residues: 2-dehydro-3-deoxyphosphooctonate aldolase (281 aa).

It belongs to the KdsA family.

The protein localises to the cytoplasm. The catalysed reaction is D-arabinose 5-phosphate + phosphoenolpyruvate + H2O = 3-deoxy-alpha-D-manno-2-octulosonate-8-phosphate + phosphate. It participates in carbohydrate biosynthesis; 3-deoxy-D-manno-octulosonate biosynthesis; 3-deoxy-D-manno-octulosonate from D-ribulose 5-phosphate: step 2/3. It functions in the pathway bacterial outer membrane biogenesis; lipopolysaccharide biosynthesis. This Stutzerimonas stutzeri (strain A1501) (Pseudomonas stutzeri) protein is 2-dehydro-3-deoxyphosphooctonate aldolase.